Consider the following 402-residue polypeptide: CCA-adding enzyme (402 aa).

The ATP site is built by G32 and R35. Residues G32 and R35 each coordinate CTP. Residues D45 and D47 each contribute to the Mg(2+) site. 5 residues coordinate ATP: R119, D162, R165, R168, and R171. Positions 119, 162, 165, 168, and 171 each coordinate CTP.

It belongs to the tRNA nucleotidyltransferase/poly(A) polymerase family. Bacterial CCA-adding enzyme type 3 subfamily. In terms of assembly, homodimer. Mg(2+) is required as a cofactor.

The enzyme catalyses a tRNA precursor + 2 CTP + ATP = a tRNA with a 3' CCA end + 3 diphosphate. The catalysed reaction is a tRNA with a 3' CCA end + 2 CTP + ATP = a tRNA with a 3' CCACCA end + 3 diphosphate. Catalyzes the addition and repair of the essential 3'-terminal CCA sequence in tRNAs without using a nucleic acid template. Adds these three nucleotides in the order of C, C, and A to the tRNA nucleotide-73, using CTP and ATP as substrates and producing inorganic pyrophosphate. tRNA 3'-terminal CCA addition is required both for tRNA processing and repair. Also involved in tRNA surveillance by mediating tandem CCA addition to generate a CCACCA at the 3' terminus of unstable tRNAs. While stable tRNAs receive only 3'-terminal CCA, unstable tRNAs are marked with CCACCA and rapidly degraded. The protein is CCA-adding enzyme of Lactococcus lactis subsp. cremoris (strain SK11).